Here is a 346-residue protein sequence, read N- to C-terminus: tRNA N6-adenosine threonylcarbamoyltransferase (346 aa).

Fe cation is bound by residues His-111 and His-115. Substrate-binding positions include 134 to 138 (LVSGG), Asp-167, Gly-180, and Asn-277. Residue Asp-305 coordinates Fe cation.

Belongs to the KAE1 / TsaD family. Fe(2+) is required as a cofactor.

Its subcellular location is the cytoplasm. It catalyses the reaction L-threonylcarbamoyladenylate + adenosine(37) in tRNA = N(6)-L-threonylcarbamoyladenosine(37) in tRNA + AMP + H(+). Required for the formation of a threonylcarbamoyl group on adenosine at position 37 (t(6)A37) in tRNAs that read codons beginning with adenine. Is involved in the transfer of the threonylcarbamoyl moiety of threonylcarbamoyl-AMP (TC-AMP) to the N6 group of A37, together with TsaE and TsaB. TsaD likely plays a direct catalytic role in this reaction. This Bordetella bronchiseptica (strain ATCC BAA-588 / NCTC 13252 / RB50) (Alcaligenes bronchisepticus) protein is tRNA N6-adenosine threonylcarbamoyltransferase.